Reading from the N-terminus, the 803-residue chain is H(+)/Cl(-) exchange transporter 7 (803 aa).

The interval 1-46 (MANVSKKVSWSGRDRDDEEGAPLLRRTGQPDEETPLLNGAGPGARQ) is disordered. Residues 1–124 (MANVSKKVSW…TAFRTVEIKR (124 aa)) lie on the Cytoplasmic side of the membrane. Ser9 bears the Phosphoserine mark. The next 2 helical transmembrane spans lie at 125 to 157 (WVIC…YRVI) and 172 to 195 (FSLL…VAFI). Residues 201 to 205 (GSGIP) carry the Selectivity filter part_1 motif. Residue Ser202 participates in chloride binding. Residues 204–211 (IPQIKCFL) constitute an intramembrane region (helical). 2 helical membrane-spanning segments follow: residues 221–239 (RLKT…VVGG) and 245–262 (EGPM…ISQG). The short motif at 243-247 (GKEGP) is the Selectivity filter part_2 element. Intramembrane regions (helical) lie at residues 286–298 (FVSA…VSAA) and 302–310 (PVGGVLFSL). Transmembrane regions (helical) follow at residues 320-339 (FLTW…LNFV), 373-403 (IPVF…FRIR), 408-430 (PCLQ…FVLI), 485-505 (PMTL…TYGL), and 510-533 (GVFI…LSYL). The short motif at 510 to 514 (GVFIP) is the Selectivity filter part_3 element. Phe512 is a binding site for chloride. An intramembrane region (helical) is located at residues 543-557 (GKYALMGAAAQLGGI). The note=Loop between two helices intramembrane region spans 558 to 560 (VRM). An intramembrane region (helical) is located at residues 561–572 (TLSLTVIMMEAT). An intramembrane region (note=Loop between two helices) is located at residues 573–576 (SNVT). The chain crosses the membrane as a helical span at residues 577-595 (YGFPIMLVLMTAKIVGDVF). At 596-803 (IEGLYDMHIQ…GLEELSLAQT (208 aa)) the chain is on the cytoplasmic side. Residue Tyr600 coordinates chloride. 2 CBS domains span residues 629-693 (MSTP…VFVE) and 739-797 (MNPS…GLEE). ATP is bound by residues 656 to 658 (HNG) and 781 to 784 (TRKD). At Ser799 the chain carries Phosphoserine.

It belongs to the chloride channel (TC 2.A.49) family. ClC-7/CLCN7 subfamily. As to quaternary structure, chloride channel 7 are heteromers of alpha (CLCN7) and beta (OSTM1) subunits. As to expression, liver, spleen, kidneys and brain.

Its subcellular location is the lysosome membrane. It catalyses the reaction 2 chloride(in) + H(+)(out) = 2 chloride(out) + H(+)(in). Its function is as follows. Slowly voltage-gated channel mediating the exchange of chloride ions against protons. Functions as antiporter and contributes to the acidification of the lysosome lumen and may be involved in maintaining lysosomal pH. The CLC channel family contains both chloride channels and proton-coupled anion transporters that exchange chloride or another anion for protons. The presence of conserved gating glutamate residues is typical for family members that function as antiporters. The sequence is that of H(+)/Cl(-) exchange transporter 7 from Mus musculus (Mouse).